We begin with the raw amino-acid sequence, 406 residues long: Odorant receptor 10a (406 aa).

At Met-1 to Leu-45 the chain is on the cytoplasmic side. The chain crosses the membrane as a helical span at residues Ile-46–Leu-66. Residues Asp-67–Ala-74 lie on the Extracellular side of the membrane. The chain crosses the membrane as a helical span at residues Leu-75–Leu-95. The Cytoplasmic portion of the chain corresponds to Arg-96 to Ala-143. A helical transmembrane segment spans residues Gly-144–Leu-164. Residues Gln-165–Pro-189 lie on the Extracellular side of the membrane. N-linked (GlcNAc...) asparagine glycosylation occurs at Asn-178. The helical transmembrane segment at Phe-190–Gly-210 threads the bilayer. The Cytoplasmic portion of the chain corresponds to Gly-211 to Thr-281. A helical transmembrane segment spans residues Ile-282–Leu-302. The Extracellular portion of the chain corresponds to Leu-303 to Asn-308. A helical membrane pass occupies residues Gly-309 to Tyr-329. Residues Cys-330–Arg-372 lie on the Cytoplasmic side of the membrane. Residues Pro-373–Gln-393 traverse the membrane as a helical segment. Topologically, residues Thr-394–Gln-406 are extracellular.

It belongs to the insect chemoreceptor superfamily. Heteromeric odorant receptor channel (TC 1.A.69) family. Or1a subfamily. As to quaternary structure, interacts with Orco. Complexes exist early in the endomembrane system in olfactory sensory neurons (OSNs), coupling these complexes to the conserved ciliary trafficking pathway. Expressed in olfactory sensory neurons in the antenna.

The protein localises to the cell membrane. Its function is as follows. Odorant receptor which mediates acceptance or avoidance behavior, depending on its substrates. The odorant receptor repertoire encodes a large collection of odor stimuli that vary widely in identity, intensity, and duration. May form a complex with Orco to form odorant-sensing units, providing sensitive and prolonged odorant signaling and calcium permeability. Involved in the behavioral responses to esters, and specifically to ethyl hexanoate, benzaldehyde, and acetophenone. The sequence is that of Odorant receptor 10a (Or10a) from Drosophila melanogaster (Fruit fly).